We begin with the raw amino-acid sequence, 262 residues long: uncharacterized protein (262 aa).

Residues 6–70 form the S4 RNA-binding domain; that stretch reads LRINQFLAHY…LKNKKFSVLV (65 aa). Asp-108 (nucleophile) is an active-site residue.

The protein belongs to the pseudouridine synthase RsuA family.

It carries out the reaction a uridine in RNA = a pseudouridine in RNA. This is an uncharacterized protein from Helicobacter pylori (strain J99 / ATCC 700824) (Campylobacter pylori J99).